A 360-amino-acid chain; its full sequence is Peptide chain release factor 1 (360 aa).

Gln-237 is subject to N5-methylglutamine.

Belongs to the prokaryotic/mitochondrial release factor family. Methylated by PrmC. Methylation increases the termination efficiency of RF1.

Its subcellular location is the cytoplasm. Peptide chain release factor 1 directs the termination of translation in response to the peptide chain termination codons UAG and UAA. In Azotobacter vinelandii (strain DJ / ATCC BAA-1303), this protein is Peptide chain release factor 1.